A 78-amino-acid chain; its full sequence is Omega-conotoxin-like VnMKLT1-0111 (78 aa).

Residues 1–22 (MKLTCMMIVAVLFLTAWTFVTA) form the signal peptide. Residues 23–48 (DSRNGLEYLFPKAHYEMNPEASKLNK) constitute a propeptide that is removed on maturation. Cystine bridges form between cysteine 52-cysteine 69, cysteine 59-cysteine 73, and cysteine 68-cysteine 77.

This sequence belongs to the conotoxin O1 superfamily. As to expression, expressed by the venom duct.

The protein localises to the secreted. Its function is as follows. Omega-conotoxins act at presynaptic membranes, they bind and block voltage-gated calcium channels (Cav). The protein is Omega-conotoxin-like VnMKLT1-0111 of Conus ventricosus (Mediterranean cone).